The following is a 387-amino-acid chain: S-adenosylmethionine synthase (387 aa).

His16 is an ATP binding site. Residue Asp18 participates in Mg(2+) binding. Glu44 contributes to the K(+) binding site. L-methionine-binding residues include Glu57 and Gln100. The flexible loop stretch occupies residues 100–110 (QSPDIAQGVDE). ATP-binding positions include 167–169 (DAK), 232–233 (RF), Asp241, 247–248 (RK), Ala264, and Lys268. Residue Asp241 participates in L-methionine binding. An L-methionine-binding site is contributed by Lys272.

This sequence belongs to the AdoMet synthase family. Homotetramer; dimer of dimers. Mg(2+) is required as a cofactor. Requires K(+) as cofactor.

Its subcellular location is the cytoplasm. The enzyme catalyses L-methionine + ATP + H2O = S-adenosyl-L-methionine + phosphate + diphosphate. It participates in amino-acid biosynthesis; S-adenosyl-L-methionine biosynthesis; S-adenosyl-L-methionine from L-methionine: step 1/1. In terms of biological role, catalyzes the formation of S-adenosylmethionine (AdoMet) from methionine and ATP. The overall synthetic reaction is composed of two sequential steps, AdoMet formation and the subsequent tripolyphosphate hydrolysis which occurs prior to release of AdoMet from the enzyme. The sequence is that of S-adenosylmethionine synthase from Janthinobacterium sp. (strain Marseille) (Minibacterium massiliensis).